Here is a 143-residue protein sequence, read N- to C-terminus: Nucleoside diphosphate kinase (143 aa).

Residues Lys11, Phe59, Arg87, Thr93, Arg104, and Asn114 each coordinate ATP. Residue His117 is the Pros-phosphohistidine intermediate of the active site.

It belongs to the NDK family. As to quaternary structure, homotetramer. It depends on Mg(2+) as a cofactor.

Its subcellular location is the cytoplasm. The catalysed reaction is a 2'-deoxyribonucleoside 5'-diphosphate + ATP = a 2'-deoxyribonucleoside 5'-triphosphate + ADP. The enzyme catalyses a ribonucleoside 5'-diphosphate + ATP = a ribonucleoside 5'-triphosphate + ADP. Major role in the synthesis of nucleoside triphosphates other than ATP. The ATP gamma phosphate is transferred to the NDP beta phosphate via a ping-pong mechanism, using a phosphorylated active-site intermediate. In Tolumonas auensis (strain DSM 9187 / NBRC 110442 / TA 4), this protein is Nucleoside diphosphate kinase.